A 212-amino-acid polypeptide reads, in one-letter code: High frequency lysogenization protein HflD homolog (212 aa).

Residues 92–128 (LIALERKLNAKSAALDELGKRIGQLERQLEHFELLSE) are a coiled coil.

It belongs to the HflD family.

It localises to the cytoplasm. Its subcellular location is the cell inner membrane. The polypeptide is High frequency lysogenization protein HflD homolog (Pectobacterium atrosepticum (strain SCRI 1043 / ATCC BAA-672) (Erwinia carotovora subsp. atroseptica)).